We begin with the raw amino-acid sequence, 316 residues long: Porphobilinogen deaminase (316 aa).

Cysteine 245 carries the S-(dipyrrolylmethanemethyl)cysteine modification.

The protein belongs to the HMBS family. As to quaternary structure, monomer. Dipyrromethane is required as a cofactor.

It carries out the reaction 4 porphobilinogen + H2O = hydroxymethylbilane + 4 NH4(+). The protein operates within porphyrin-containing compound metabolism; protoporphyrin-IX biosynthesis; coproporphyrinogen-III from 5-aminolevulinate: step 2/4. It functions in the pathway porphyrin-containing compound metabolism; chlorophyll biosynthesis. Tetrapolymerization of the monopyrrole PBG into the hydroxymethylbilane pre-uroporphyrinogen in several discrete steps. The protein is Porphobilinogen deaminase of Prochlorococcus marinus (strain MIT 9312).